The primary structure comprises 254 residues: Ubiquinone/menaquinone biosynthesis C-methyltransferase UbiE (254 aa).

S-adenosyl-L-methionine contacts are provided by residues Thr-77, Asp-98, 126–127 (NA), and Ser-143.

The protein belongs to the class I-like SAM-binding methyltransferase superfamily. MenG/UbiE family.

It catalyses the reaction a 2-demethylmenaquinol + S-adenosyl-L-methionine = a menaquinol + S-adenosyl-L-homocysteine + H(+). It carries out the reaction a 2-methoxy-6-(all-trans-polyprenyl)benzene-1,4-diol + S-adenosyl-L-methionine = a 5-methoxy-2-methyl-3-(all-trans-polyprenyl)benzene-1,4-diol + S-adenosyl-L-homocysteine + H(+). It participates in quinol/quinone metabolism; menaquinone biosynthesis; menaquinol from 1,4-dihydroxy-2-naphthoate: step 2/2. The protein operates within cofactor biosynthesis; ubiquinone biosynthesis. Methyltransferase required for the conversion of demethylmenaquinol (DMKH2) to menaquinol (MKH2) and the conversion of 2-polyprenyl-6-methoxy-1,4-benzoquinol (DDMQH2) to 2-polyprenyl-3-methyl-6-methoxy-1,4-benzoquinol (DMQH2). This chain is Ubiquinone/menaquinone biosynthesis C-methyltransferase UbiE, found in Blochmanniella floridana.